Here is a 393-residue protein sequence, read N- to C-terminus: Endoglucanase 1 (393 aa).

Positions M1–A26 are cleaved as a signal peptide. D34 serves as the catalytic Nucleophile. Residue D152 is the Proton donor of the active site. Positions G233–H393 are disordered. Low complexity-rich tracts occupy residues Q319–G329 and D337–A370. A glycan (N-linked (GlcNAc...) asparagine) is linked at N343. Residues A371 to G384 are compositionally biased toward gly residues.

This sequence belongs to the glycosyl hydrolase 45 (cellulase K) family. Post-translationally, may also be O-glycosylated. In terms of tissue distribution, hyphal tip.

The protein resides in the secreted. The enzyme catalyses Endohydrolysis of (1-&gt;4)-beta-D-glucosidic linkages in cellulose, lichenin and cereal beta-D-glucans.. This is Endoglucanase 1 (EGL1) from Mycosarcoma maydis (Corn smut fungus).